We begin with the raw amino-acid sequence, 1416 residues long: DNA-directed RNA polymerase subunit beta' (1416 aa).

Residues Cys71, Cys73, Cys86, and Cys89 each contribute to the Zn(2+) site. Mg(2+) is bound by residues Asp461, Asp463, and Asp465. Positions 815, 889, 896, and 899 each coordinate Zn(2+).

Belongs to the RNA polymerase beta' chain family. In terms of assembly, the RNAP catalytic core consists of 2 alpha, 1 beta, 1 beta' and 1 omega subunit. When a sigma factor is associated with the core the holoenzyme is formed, which can initiate transcription. It depends on Mg(2+) as a cofactor. Requires Zn(2+) as cofactor.

The enzyme catalyses RNA(n) + a ribonucleoside 5'-triphosphate = RNA(n+1) + diphosphate. In terms of biological role, DNA-dependent RNA polymerase catalyzes the transcription of DNA into RNA using the four ribonucleoside triphosphates as substrates. The polypeptide is DNA-directed RNA polymerase subunit beta' (Haemophilus influenzae (strain PittGG)).